Consider the following 80-residue polypeptide: Ubiquinol-cytochrome c reductase complex assembly factor 5 (80 aa).

Residues 1–19 (MFSRAQVRRALQRVPGKQR) are Mitochondrial matrix-facing. A helical membrane pass occupies residues 20-41 (FGIYRFLPFFFVLGGAMEWIMI). Residues 42 to 80 (KVRVGQETFYDVYRRKASERQYQRRLEDTSETNLHKLIK) are Mitochondrial intermembrane-facing.

This sequence belongs to the UQCC5 family. Associates with the mitochondrial ribosome. Interacts with UQCC6. Interacts with MT-CYB; interacts with newly synthesizes MT-CYB. Forms a complex, named COMB/coordinator of mitochondrial CYTB biogenesis, composed of UQCC1, UQCC2, UQCC4, UQCC5 and UQCC6; stabilizes nascent cytochrome b/MT-CYB and promotes its membrane insertion.

The protein localises to the mitochondrion inner membrane. Functionally, required for the assembly and stability of the mitochondrial ubiquinol-cytochrome c reductase complex (complex III (CIII) or cytochrome b-c1 complex), a multisubunit transmembrane complex that is part of the mitochondrial electron transport chain (ETC) which drives oxidative phosphorylation. Mediates early complex III biogenesis. Participates in regulating the levels of electron transport chain proteins, and therefore energy supply, in response to changes in energy demand. Also required for cytochrome c oxidase complex (complex IV) assembly. The protein is Ubiquinol-cytochrome c reductase complex assembly factor 5 of Mus musculus (Mouse).